The chain runs to 397 residues: Acetate kinase (397 aa).

A Mg(2+)-binding site is contributed by Asn9. Lys16 contacts ATP. Arg87 lines the substrate pocket. The active-site Proton donor/acceptor is the Asp144. ATP-binding positions include 204–208, 279–281, and 327–331; these read HLGNG, DCR, and GIGEN. Glu381 serves as a coordination point for Mg(2+).

It belongs to the acetokinase family. As to quaternary structure, homodimer. Mg(2+) is required as a cofactor. Mn(2+) serves as cofactor.

Its subcellular location is the cytoplasm. It catalyses the reaction acetate + ATP = acetyl phosphate + ADP. The protein operates within metabolic intermediate biosynthesis; acetyl-CoA biosynthesis; acetyl-CoA from acetate: step 1/2. Its function is as follows. Catalyzes the formation of acetyl phosphate from acetate and ATP. Can also catalyze the reverse reaction. This is Acetate kinase from Chromobacterium violaceum (strain ATCC 12472 / DSM 30191 / JCM 1249 / CCUG 213 / NBRC 12614 / NCIMB 9131 / NCTC 9757 / MK).